Consider the following 433-residue polypeptide: Dihydrolipoyllysine-residue acetyltransferase component of pyruvate dehydrogenase complex (433 aa).

One can recognise a Lipoyl-binding domain in the interval 2-77 (AFEFRLPDIG…VVGDVIVKID (76 aa)). Residue Lys43 is modified to N6-lipoyllysine. Disordered stretches follow at residues 80-134 (DAEE…PSVR) and 164-204 (YLNG…FPET). 2 stretches are compositionally biased toward basic and acidic residues: residues 84 to 103 (MQFK…KEQE) and 117 to 126 (EKTEVDESKT). A Peripheral subunit-binding (PSBD) domain is found at 128-165 (KAMPSVRKYARENGVNIKAVNGSGKNGRITKEDIDAYL). Residues 166–188 (NGGSSEEGSNTSVASESTSSDVV) are compositionally biased toward low complexity. His404 is a catalytic residue.

It belongs to the 2-oxoacid dehydrogenase family. Forms a 24-polypeptide structural core with octahedral symmetry. (R)-lipoate serves as cofactor.

It catalyses the reaction N(6)-[(R)-dihydrolipoyl]-L-lysyl-[protein] + acetyl-CoA = N(6)-[(R)-S(8)-acetyldihydrolipoyl]-L-lysyl-[protein] + CoA. In terms of biological role, the pyruvate dehydrogenase complex catalyzes the overall conversion of pyruvate to acetyl-CoA and CO(2). It contains multiple copies of three enzymatic components: pyruvate dehydrogenase (E1), dihydrolipoamide acetyltransferase (E2) and lipoamide dehydrogenase (E3). This is Dihydrolipoyllysine-residue acetyltransferase component of pyruvate dehydrogenase complex (pdhC) from Staphylococcus epidermidis (strain ATCC 12228 / FDA PCI 1200).